A 134-amino-acid chain; its full sequence is Large ribosomal subunit protein uL24 (134 aa).

It belongs to the universal ribosomal protein uL24 family. Part of the 50S ribosomal subunit.

In terms of biological role, one of two assembly initiator proteins, it binds directly to the 5'-end of the 23S rRNA, where it nucleates assembly of the 50S subunit. Functionally, located at the polypeptide exit tunnel on the outside of the subunit. The polypeptide is Large ribosomal subunit protein uL24 (Sulfolobus acidocaldarius (strain ATCC 33909 / DSM 639 / JCM 8929 / NBRC 15157 / NCIMB 11770)).